Consider the following 207-residue polypeptide: MADKGTLYIISAPSGAGKTSLVAALVDKLAQVRISISHTTRAMRPGEKDGVNYHFTDRDCFVRQVEQGRFLEHAQVFGNLYGTSADWVAQTLRTGDDVILEIDWQGATQIRKQLPDSVSIFILPPSLEALAGRLRGRETDDETVIQQRLDGAQEEMSHYGEFDYLVVNDDFQRALYELEAIVEARRLVTARQVARQAATLQNLLARR.

Residues 5–183 form the Guanylate kinase-like domain; sequence GTLYIISAPS…ALYELEAIVE (179 aa). 12-19 is an ATP binding site; that stretch reads APSGAGKT.

It belongs to the guanylate kinase family.

It localises to the cytoplasm. It carries out the reaction GMP + ATP = GDP + ADP. Essential for recycling GMP and indirectly, cGMP. The sequence is that of Guanylate kinase from Alcanivorax borkumensis (strain ATCC 700651 / DSM 11573 / NCIMB 13689 / SK2).